A 580-amino-acid polypeptide reads, in one-letter code: Amino-acid acetyltransferase, mitochondrial (580 aa).

Positions 403–560 (LTMQNLFDDK…NPRHKNGVVN (158 aa)) constitute an N-acetyltransferase domain.

It belongs to the acetyltransferase family.

The protein resides in the mitochondrion. It carries out the reaction L-glutamate + acetyl-CoA = N-acetyl-L-glutamate + CoA + H(+). The protein operates within amino-acid biosynthesis; L-arginine biosynthesis; N(2)-acetyl-L-ornithine from L-glutamate: step 1/4. Functionally, N-acetylglutamate synthase involved in arginine biosynthesis. The protein is Amino-acid acetyltransferase, mitochondrial (ARG2) of Candida dubliniensis (strain CD36 / ATCC MYA-646 / CBS 7987 / NCPF 3949 / NRRL Y-17841) (Yeast).